The chain runs to 178 residues: Oligoribonuclease (178 aa).

Positions 7 to 168 constitute an Exonuclease domain; it reads LIWIDLEMTG…DDIRESIAEL (162 aa). Residue tyrosine 128 is part of the active site.

This sequence belongs to the oligoribonuclease family.

The protein localises to the cytoplasm. In terms of biological role, 3'-to-5' exoribonuclease specific for small oligoribonucleotides. In Francisella tularensis subsp. novicida (strain U112), this protein is Oligoribonuclease.